Here is a 309-residue protein sequence, read N- to C-terminus: Vomeronasal type-1 receptor 46 (309 aa).

Residues 1–20 (MNKANIFCTDTNMKVILFSE) are Extracellular-facing. Residues 21 to 41 (VSVGISANSILFISHLCMFLG) form a helical membrane-spanning segment. Residues 42-50 (ESRPKPIDL) lie on the Cytoplasmic side of the membrane. Residues 51-71 (YIAFFSLTHLMLLVTMGLIAV) form a helical membrane-spanning segment. Residues 72 to 85 (DMFMPGGRWDSTTC) are Extracellular-facing. Cys85 and Cys171 are disulfide-bonded. Residues 86 to 106 (TFLMYLHIVLRGPTLCATCLL) traverse the membrane as a helical segment. Residues 107–134 (NVLWTITLSPRNSCLTKFKHKSPHHISG) are Cytoplasmic-facing. The chain crosses the membrane as a helical span at residues 135 to 155 (AFLFLCVLYMSLSSELLSITA). Residues 156–192 (SLNLTSENFLYVSQSCSILPMSYSIKSMFSTKMAIRE) lie on the Extracellular side of the membrane. An N-linked (GlcNAc...) asparagine glycan is attached at Asn158. The helical transmembrane segment at 193 to 213 (AFLIGLMVLSSGYMVALLWSH) threads the bilayer. At 214 to 237 (KKQAQHLHSNSLSLKASPEQRATR) the chain is on the cytoplasmic side. The helical transmembrane segment at 238–258 (TIMLLMSFFVVFYILDSVIFY) threads the bilayer. The Extracellular segment spans residues 259–267 (SRMKFKDDS). The helical transmembrane segment at 268 to 288 (IFVCVQIIVSHSYVTVSPFVF) threads the bilayer. Over 289 to 309 (ICTEKHIIKFFWSLCGRIVNI) the chain is Cytoplasmic.

It belongs to the G-protein coupled receptor 1 family.

Its subcellular location is the cell membrane. Its function is as follows. Putative pheromone receptor implicated in the regulation of social and reproductive behavior. The protein is Vomeronasal type-1 receptor 46 (Vmn1r46) of Mus musculus (Mouse).